The chain runs to 361 residues: Mitochondrial import receptor subunit TOM40 homolog (361 aa).

Residues 1-10 (MGNVLAASSP) are compositionally biased toward low complexity. The tract at residues 1–71 (MGNVLAASSP…AASAGGTADD (71 aa)) is disordered. Residues 11–36 (PAGPPPPPAPPLVGLPPPPPSPPGFT) are compositionally biased toward pro residues. The span at 40-52 (LGGGLGAGAGTGR) shows a compositional bias: gly residues. Low complexity predominate over residues 59–71 (GTAAASAGGTADD).

The protein belongs to the Tom40 family. In terms of assembly, forms part of the preprotein translocase complex of the outer mitochondrial membrane (TOM complex) which consists of at least 7 different proteins (TOMM5, TOMM6, TOMM7, TOMM20, TOMM22, TOMM40 and TOMM70). Interacts with mitochondrial targeting sequences. Interacts with TIMM29; linking the TIM22 complex to the TOM complex. Forms a complex with BCAP31 (via C-terminus) which mediates the translocation of components of the mitochondrial membrane respiratory chain NADH dehydrogenase (Complex I) from the cytosol to the mitochondria. Interacts (via N-terminus) with CYP1A1 (via mitochondrial targeting signal); this interaction is required for CYP1A1 translocation across the mitochondrial outer membrane.

Its subcellular location is the mitochondrion outer membrane. Functionally, channel-forming protein essential for import of protein precursors into mitochondria. Plays a role in the assembly of the mitochondrial membrane respiratory chain NADH dehydrogenase (Complex I) by forming a complex with BCAP31 and mediating the translocation of Complex I components from the cytosol to the mitochondria. This is Mitochondrial import receptor subunit TOM40 homolog from Bos taurus (Bovine).